Consider the following 604-residue polypeptide: Kinesin-like protein KIN-14O (604 aa).

The stretch at 22–61 (MLNHDKDISALQEEISALRSRQRHLDHRRQEALDKLIDLK) forms a coiled coil. A Kinesin motor domain is found at 63–387 (SIRVFCRVRP…LSFAKRARSI (325 aa)). An ATP-binding site is contributed by 141–148 (GQTGTGKT). Residues 383–443 (RARSIESSKE…EERKKLSSSA (61 aa)) are a coiled coil. Disordered stretches follow at residues 465-511 (DSAE…KTRL) and 565-604 (SNNSIDSTAASAPRRRESFISRPAQRAPLHQHRRRMSSLT). Positions 565 to 574 (SNNSIDSTAA) are enriched in polar residues. The segment covering 593-604 (LHQHRRRMSSLT) has biased composition (basic residues).

The protein belongs to the TRAFAC class myosin-kinesin ATPase superfamily. Kinesin family. KIN-14 subfamily.

This chain is Kinesin-like protein KIN-14O, found in Oryza sativa subsp. japonica (Rice).